We begin with the raw amino-acid sequence, 502 residues long: Actin nucleation-promoting factor WAS (502 aa).

Positions 39–148 (LGRKCLTLAT…ALVQEKIQKR (110 aa)) constitute a WH1 domain. Residues 146-240 (QKRNQRQSGD…KKISKADIGA (95 aa)) are disordered. Residues 201–211 (DIQNPDITSSR) show a composition bias toward polar residues. Ser-221 bears the Phosphoserine mark. Residues 238-251 (IGAPSGFKHVSHVG) enclose the CRIB domain. Phosphotyrosine; by FYN and HCK is present on Tyr-291. Positions 307 to 502 (MRRQEPLPPP…DEDEDDEWDD (196 aa)) are disordered. 2 GRSGPLPPXP motif repeats span residues 337–346 (GRSGPLPPVP) and 376–385 (GRSGPLPPPP). A compositionally biased stretch (pro residues) spans 341-419 (PLPPVPLGIA…PAPPPLPPAL (79 aa)). The 18-residue stretch at 430 to 447 (GRGALLDQIRQGIQLNKT) folds into the WH2 domain. 2 positions are modified to phosphoserine; by CK2: Ser-483 and Ser-484. Positions 486–502 (EGEDQAGDEDEDDEWDD) are enriched in acidic residues.

As to quaternary structure, binds the Arp2/3 complex. Interacts with CDC42, RAC, NCK, HCK, FYN, SRC kinase FGR, BTK, ABL1, PSTPIP1, WIP, and to the p85 subunit of PLC-gamma. Interacts (via C-terminus) with ALDOA. Interacts with NCK1 (via SH3 domains). Interacts with FCHSD2. (Microbial infection) Interacts with E.coli effector protein EspF(U). In terms of processing, phosphorylated at Tyr-291 by FYN and HCK, inducing WAS effector activity after TCR engagement. Phosphorylation at Tyr-291 enhances WAS activity in promoting actin polymerization and filopodia formation. In terms of tissue distribution, expressed predominantly in the thymus. Also found, to a much lesser extent, in the spleen.

The protein resides in the cytoplasm. The protein localises to the cytoskeleton. Its subcellular location is the nucleus. Its function is as follows. Effector protein for Rho-type GTPases that regulates actin filament reorganization via its interaction with the Arp2/3 complex. Important for efficient actin polymerization. Possible regulator of lymphocyte and platelet function. Mediates actin filament reorganization and the formation of actin pedestals upon infection by pathogenic bacteria. In addition to its role in the cytoplasmic cytoskeleton, also promotes actin polymerization in the nucleus, thereby regulating gene transcription and repair of damaged DNA. Promotes homologous recombination (HR) repair in response to DNA damage by promoting nuclear actin polymerization, leading to drive motility of double-strand breaks (DSBs). This chain is Actin nucleation-promoting factor WAS (WAS), found in Homo sapiens (Human).